Consider the following 510-residue polypeptide: Bone morphogenetic protein 6 (510 aa).

An N-terminal signal peptide occupies residues 1–20 (MPGLGRRAQWLCWWWGLLCS). Residues 21-371 (CGPPPLRPPL…VSEVHVRTTR (351 aa)) constitute a propeptide that is removed on maturation. Disordered stretches follow at residues 87 to 129 (PHRP…RLKS) and 143 to 199 (NDDE…PLTS). Residues 106–116 (PQQQQQQQQQQ) are compositionally biased toward low complexity. N-linked (GlcNAc...) asparagine glycans are attached at residues N238, N266, N383, N401, and N451. The tract at residues 370-402 (TRSASSRRRQQSRNRSTQSQDVSRGSGSSDYNG) is disordered. A compositionally biased stretch (polar residues) spans 390–401 (DVSRGSGSSDYN). Disulfide bonds link C409–C475, C438–C507, and C442–C509.

The protein belongs to the TGF-beta family. Interacts with SOSTDC1. Interacts (when glycosylated) with type I receptor ACVR1; the interaction may induce HAMP expression. Interacts with type II receptor ACVR2B. Interacts with Hemojuvelin/HJV. Interacts with ERFE; the interaction inhibits BMP-induced transcription of HAMP. Interacts with BMPR1A/ALK3. Forms heterodimers with BMP2 in vitro; the heterodimer then binds to its receptor BMPR1A /ALK3 and may induce HAMP expression. Expressed in the lung. Low levels seen in the kidney.

The protein resides in the secreted. Its function is as follows. Growth factor of the TGF-beta superfamily that plays essential roles in many developmental processes including cartilage and bone formation. Also plays an important role in the regulation of HAMP/hepcidin expression and iron metabolism by acting as a ligand for hemojuvelin/HJV. Also acts to promote expression of HAMP, potentially via the interaction with its receptor BMPR1A/ALK3. Initiates the canonical BMP signaling cascade by associating with type I receptor ACVR1 and type II receptor ACVR2B. In turn, ACVR1 propagates signal by phosphorylating SMAD1/5/8 that travel to the nucleus and act as activators and repressors of transcription of target. Can also signal through non-canonical pathway such as TAZ-Hippo signaling cascade to modulate VEGF signaling by regulating VEGFR2 expression. This Mus musculus (Mouse) protein is Bone morphogenetic protein 6 (Bmp6).